The primary structure comprises 464 residues: tRNA modification GTPase MnmE (464 aa).

The (6S)-5-formyl-5,6,7,8-tetrahydrofolate site is built by arginine 26, glutamate 92, and arginine 131. In terms of domain architecture, TrmE-type G spans 227-385 (GIKVAILGRV…LISALKDYVS (159 aa)). Residue asparagine 237 participates in K(+) binding. Residues 237 to 242 (NAGKSS), 256 to 262 (SNIAGTT), and 281 to 284 (DTAG) each bind GTP. Serine 241 provides a ligand contact to Mg(2+). K(+)-binding residues include serine 256, isoleucine 258, and threonine 261. Threonine 262 is a binding site for Mg(2+). Lysine 464 lines the (6S)-5-formyl-5,6,7,8-tetrahydrofolate pocket.

The protein belongs to the TRAFAC class TrmE-Era-EngA-EngB-Septin-like GTPase superfamily. TrmE GTPase family. In terms of assembly, homodimer. Heterotetramer of two MnmE and two MnmG subunits. K(+) serves as cofactor.

Its subcellular location is the cytoplasm. Exhibits a very high intrinsic GTPase hydrolysis rate. Involved in the addition of a carboxymethylaminomethyl (cmnm) group at the wobble position (U34) of certain tRNAs, forming tRNA-cmnm(5)s(2)U34. This chain is tRNA modification GTPase MnmE, found in Brachyspira hyodysenteriae (strain ATCC 49526 / WA1).